We begin with the raw amino-acid sequence, 317 residues long: Melanocyte-stimulating hormone receptor (317 aa).

Over 1-37 the chain is Extracellular; sequence MPVQGSQRRLLGSLNSTPTATPHLGLAANQTGARCLE. N-linked (GlcNAc...) asparagine glycosylation occurs at Asn29. Residues 38 to 63 form a helical membrane-spanning segment; that stretch reads VSVPDGLFLSLGLVSLVENVLVVTAI. Residues 64-72 lie on the Cytoplasmic side of the membrane; the sequence is AKNRNLHSP. A helical transmembrane segment spans residues 73–93; the sequence is MYCFICCLALSDLLVSGSNML. Residues 94–118 are Extracellular-facing; it reads ETAVTLLLEAGALAARAAVVQQLDN. Residues 119-140 traverse the membrane as a helical segment; it reads VIDVITCSSMLSSLCFLGAIAV. Residues 141 to 163 are Cytoplasmic-facing; sequence DRYISIFYALRYHSIVTLPRARR. Residues 164–183 traverse the membrane as a helical segment; it reads AVAAIWVASVLFSTLFIAYY. The Extracellular portion of the chain corresponds to 184-191; it reads DHAAVLLC. The helical transmembrane segment at 192-211 threads the bilayer; sequence LVIFFLAMLVLMAVLYVHML. The Cytoplasmic portion of the chain corresponds to 212–240; sequence ARACQHAQGIARLHKRQRLAHQGFGLKGA. A helical membrane pass occupies residues 241–266; the sequence is ATLTILLGIFFLCWGPFFLHLTLIVL. Residues 267 to 279 lie on the Extracellular side of the membrane; it reads CPQHPTCSCIFKN. Residues 280-300 traverse the membrane as a helical segment; sequence FNLFLALIICNAIIDPLIYAF. The Cytoplasmic portion of the chain corresponds to 301–317; sequence RSQELRRTLKEVLLCSW. A lipid anchor (S-palmitoyl cysteine) is attached at Cys315.

It belongs to the G-protein coupled receptor 1 family. In terms of assembly, interacts with MGRN1, but does not undergo MGRN1-mediated ubiquitination; this interaction competes with GNAS-binding and thus inhibits agonist-induced cAMP production. Interacts with OPN3; the interaction results in a decrease in MC1R-mediated cAMP signaling and ultimately a decrease in melanin production in melanocytes.

Its subcellular location is the cell membrane. Receptor for MSH (alpha, beta and gamma) and ACTH. The activity of this receptor is mediated by G proteins which activate adenylate cyclase. Mediates melanogenesis, the production of eumelanin (black/brown) and phaeomelanin (red/yellow), via regulation of cAMP signaling in melanocytes. In Papio hamadryas (Hamadryas baboon), this protein is Melanocyte-stimulating hormone receptor (MC1R).